The following is a 218-amino-acid chain: Glutathione S-transferase Y1 (218 aa).

One can recognise a GST N-terminal domain in the interval 2 to 88 (PMILGYWNVR…YIARKHNLCG (87 aa)). Residues 7 to 8 (YW), 46 to 50 (WLNEK), 59 to 60 (NL), and 72 to 73 (QS) contribute to the glutathione site. Positions 90 to 208 (TEEERIRVDI…KTSRFLRRPI (119 aa)) constitute a GST C-terminal domain. Tyr-116 is a binding site for substrate.

It belongs to the GST superfamily. Mu family. In terms of assembly, homodimer.

The protein resides in the cytoplasm. It catalyses the reaction RX + glutathione = an S-substituted glutathione + a halide anion + H(+). Its function is as follows. Conjugation of reduced glutathione to a wide number of exogenous and endogenous hydrophobic electrophiles. This Cricetulus longicaudatus (Long-tailed dwarf hamster) protein is Glutathione S-transferase Y1.